The following is a 226-amino-acid chain: PKHD-type hydroxylase PLES_48951 (226 aa).

The region spanning 78–178 is the Fe2OG dioxygenase domain; it reads KVFPPLFNCY…RYASFFWTQS (101 aa). Fe cation is bound by residues H96, D98, and H159. R169 provides a ligand contact to 2-oxoglutarate.

Fe(2+) serves as cofactor. The cofactor is L-ascorbate.

The chain is PKHD-type hydroxylase PLES_48951 from Pseudomonas aeruginosa (strain LESB58).